Consider the following 605-residue polypeptide: MAQAKKSVDIKNIRNFSIIAHIDHGKSTLADRFIQMCGGLQDREMQAQVLDSMELERERGITIKAASVTLYYTHPNGQEYQLNFIDTPGHVDFSYEVSRSLAACEGALLVVDAAQGVEAQSVANCYTAIEQGLEVLPILNKIDLPQAEPERVIHEIEEIIGIEATNAPTCSAKTGLGVEGVLETLVDVIPAPTGDREAPLQALIIDSWFDNYLGVVSLVRIKDGRIRKGDKMLVKSTGQTHIVTSVGVFNPKHTETGVLEAGEVGFVIAGIKDIFGAPVGDTITLSTTPEVASLPGFKKVKPQVYAGLFPIDASDFEPFREALQKLQINDSALFFEPESSDALGFGFRCGFLGMLHMEIVQERLEREYDLDLISSAPTVVYEAVTKKGDTIYIDSPSKMPDGSVVEDLREPIAECHILVPQEYLGNVMILCIERRGVQKDMKFLGNQVSITFEIPMAEVVMDFFDKLKSCSRGFASLDYNFIRFESSSLVKVDVLINGEKVDALAMICHRNDARHRGIALVDKMKDLIPRQMFDVAIQAAIGAQIIARSTVKAMRKNVLAKCYGGDVSRKKKLLAKQKEGKKRMKQVGSVEIPQEAFLAVLKVER.

The region spanning 11–193 (KNIRNFSIIA…TLVDVIPAPT (183 aa)) is the tr-type G domain. GTP-binding positions include 23–28 (DHGKST) and 140–143 (NKID).

The protein belongs to the TRAFAC class translation factor GTPase superfamily. Classic translation factor GTPase family. LepA subfamily.

It localises to the cell inner membrane. It catalyses the reaction GTP + H2O = GDP + phosphate + H(+). Functionally, required for accurate and efficient protein synthesis under certain stress conditions. May act as a fidelity factor of the translation reaction, by catalyzing a one-codon backward translocation of tRNAs on improperly translocated ribosomes. Back-translocation proceeds from a post-translocation (POST) complex to a pre-translocation (PRE) complex, thus giving elongation factor G a second chance to translocate the tRNAs correctly. Binds to ribosomes in a GTP-dependent manner. This chain is Elongation factor 4, found in Acinetobacter baumannii (strain SDF).